The chain runs to 138 residues: Ribosomal RNA large subunit methyltransferase H (138 aa).

S-adenosyl-L-methionine is bound by residues G86 and 105 to 110 (LSPLTF).

This sequence belongs to the RNA methyltransferase RlmH family. In terms of assembly, homodimer.

The protein resides in the cytoplasm. The catalysed reaction is pseudouridine(1915) in 23S rRNA + S-adenosyl-L-methionine = N(3)-methylpseudouridine(1915) in 23S rRNA + S-adenosyl-L-homocysteine + H(+). Its function is as follows. Specifically methylates the pseudouridine at position 1915 (m3Psi1915) in 23S rRNA. The chain is Ribosomal RNA large subunit methyltransferase H from Prochlorococcus marinus (strain MIT 9215).